A 326-amino-acid chain; its full sequence is MSGLVPTAPEQPTEEMENQIKSPTAVPDAPPDYNSHFAPGPAGPVASPSAGLPMGYYIPQQPGAIPLYHPTGGTHPIQYQPGKYPVTNQPAPIMWMAGPAPVPNCPPGLEYLAQLDNIHVLQHVEPLELMTRFETNNRYDIKNNIDQMVYIVTEDTDDFTRNAYRNLRPFVLRVTDCLGREIMTMQRPFRCTCCCFCCPCARQELEVQCPPGVTIGFVAEHWNLCRASYSIQNEKKESMMRVRGPCATYGCGSDSVFEINSLDGVSNIGSIIRKWNGFLSTMVNADHFEIRFPLALDVKMKAMIFGSCFLIDFMYFERPPPRRMSR.

Residues 1–32 are disordered; it reads MSGLVPTAPEQPTEEMENQIKSPTAVPDAPPD. The interval 1–94 is proline-rich domain (PRD); it reads MSGLVPTAPE…PVTNQPAPIM (94 aa). Residues 1-299 are Cytoplasmic-facing; sequence MSGLVPTAPE…IRFPLALDVK (299 aa). The SH3-binding 1 motif lies at 18–25; it reads NQIKSPTA. The PPxY motif motif lies at 30–33; that stretch reads PPDY. The SH3-binding 2 motif lies at 41-49; it reads PAGPVASPS. Phosphotyrosine; by ABL is present on residues Y79 and Y84. The short motif at 94–102 is the SH3-binding 3 element; it reads MWMAGPAPV. Residues C193, C194, C195, C197, and C198 are each lipidated (S-palmitoyl cysteine). A helical membrane pass occupies residues 300 to 316; it reads MKAMIFGSCFLIDFMYF. The Extracellular portion of the chain corresponds to 317–326; that stretch reads ERPPPRRMSR.

Belongs to the phospholipid scramblase family. In terms of assembly, interacts with PDCD6. Interacts with KPNA2; this interaction mediates the nucleus import of PLSCR4. Ca(2+) is required as a cofactor. Mg(2+) serves as cofactor. It depends on Zn(2+) as a cofactor.

The protein resides in the cell membrane. It localises to the nucleus. The catalysed reaction is a 1,2-diacyl-sn-glycero-3-phosphocholine(in) = a 1,2-diacyl-sn-glycero-3-phosphocholine(out). It catalyses the reaction a 1,2-diacyl-sn-glycero-3-phospho-L-serine(in) = a 1,2-diacyl-sn-glycero-3-phospho-L-serine(out). Functionally, catalyzes metal ion-induced ATP-independent rapid bidirectional and non-specific movement of phospholipids (lipid scrambling or lipid flip-flop) between the inner and outer leaflet of the plasma membrane and participates in the redistribution of phospholipids between membrane leaflets. Metal ions bind to the calcium-binding site and induce conformation change in the protein. Has a greater affi nity for Ca(2+) than Mg(2+) and Zn(2+). The protein is Phospholipid scramblase 4 of Mus musculus (Mouse).